Here is a 56-residue protein sequence, read N- to C-terminus: Small integral membrane protein 39 (56 aa).

The helical transmembrane segment at 33 to 53 threads the bilayer; that stretch reads VVVSAVLALLVLINVVLIFLL.

It is found in the membrane. The polypeptide is Small integral membrane protein 39 (Homo sapiens (Human)).